A 730-amino-acid chain; its full sequence is Elongation factor 2 (730 aa).

In terms of domain architecture, tr-type G spans 19-228 (QRIRNIGIVA…TGVSFKDVYD (210 aa)). Residues 28–35 (AHIDHGKT), 94–98 (DTPGH), and 148–151 (NKVD) each bind GTP. The residue at position 596 (H596) is a Diphthamide.

It belongs to the TRAFAC class translation factor GTPase superfamily. Classic translation factor GTPase family. EF-G/EF-2 subfamily.

It is found in the cytoplasm. Catalyzes the GTP-dependent ribosomal translocation step during translation elongation. During this step, the ribosome changes from the pre-translocational (PRE) to the post-translocational (POST) state as the newly formed A-site-bound peptidyl-tRNA and P-site-bound deacylated tRNA move to the P and E sites, respectively. Catalyzes the coordinated movement of the two tRNA molecules, the mRNA and conformational changes in the ribosome. In Methanosarcina acetivorans (strain ATCC 35395 / DSM 2834 / JCM 12185 / C2A), this protein is Elongation factor 2.